A 206-amino-acid polypeptide reads, in one-letter code: Venom allergen 5 (206 aa).

Intrachain disulfides connect Cys4/Cys16, Cys8/Cys104, Cys28/Cys96, and Cys172/Cys189. In terms of domain architecture, SCP spans 48–191 (EEHNRFRQKV…MKIHYLICNY (144 aa)).

Belongs to the CRISP family. Venom allergen 5-like subfamily. In terms of tissue distribution, expressed by the venom gland.

It is found in the secreted. The chain is Venom allergen 5 from Polistes gallicus (Paper wasp).